The sequence spans 506 residues: Sodium-coupled neutral amino acid symporter 2 (506 aa).

Residues 1 to 23 are disordered; the sequence is MKKAEMGRFNISPDEDSSSYSSN. Over 1-76 the chain is Cytoplasmic; it reads MKKAEMGRFN…HPGTTSFGMS (76 aa). A regulates protein turnover upon amino acid deprivation region spans residues 1 to 96; that stretch reads MKKAEMGRFN…SGILGLSYAM (96 aa). Serine 12, serine 21, serine 22, and serine 55 each carry phosphoserine. A helical membrane pass occupies residues 77-96; the sequence is VFNLSNAIVGSGILGLSYAM. Asparagine 82 serves as a coordination point for Na(+). At 97-102 the chain is on the extracellular side; sequence ANTGIA. Residues 103 to 123 form a helical membrane-spanning segment; the sequence is LFIILLTFVSIFSLYSVHLLL. The Cytoplasmic segment spans residues 124–158; sequence KTANEGGSLLYEQLGHKAFGMVGKLTASGSITMQN. A helical membrane pass occupies residues 159–177; the sequence is IGAMSSYLFIVKYELPLVI. Topologically, residues 178–188 are extracellular; the sequence is QALMNIEDTNG. The helical transmembrane segment at 189–209 threads the bilayer; that stretch reads LWYLNGDYLVLLVSLVLILPL. Over 210-217 the chain is Cytoplasmic; sequence SLLRNLGY. A helical membrane pass occupies residues 218 to 238; it reads LGYTSGLSLLCMMFFLIVVIF. Residues 239–292 lie on the Extracellular side of the membrane; the sequence is KKFQISCPAEIAFLVNETVNSSLTQPATFLPDMGFNRTESDSCQPRYFIFNSQT. A disulfide bridge links cysteine 245 with cysteine 281. N-linked (GlcNAc...) asparagine glycans are attached at residues asparagine 258 and asparagine 274. The helical transmembrane segment at 293-313 threads the bilayer; the sequence is VYAVPILTFSFVCHPAILPIY. Residues 314–329 are Cytoplasmic-facing; the sequence is EELKGRSRRRMMNVSK. A helical membrane pass occupies residues 330-350; that stretch reads ISFFAMFLMYLLAALFGYLTF. Topologically, residues 351-371 are extracellular; the sequence is YGHVESELLHTYSSVMETDIL. Residues 372-392 form a helical membrane-spanning segment; that stretch reads LLIVRLAVLVAVTLTVPVVIF. Na(+) is bound at residue threonine 386. The Cytoplasmic portion of the chain corresponds to 393-413; sequence PIRSSITHLLCASKEFSWWRH. Residues 414–434 form a helical membrane-spanning segment; that stretch reads SVITVSILVFTNLLVIFVPNI. Over 435-436 the chain is Extracellular; that stretch reads RD. Residues 437–457 traverse the membrane as a helical segment; the sequence is IFGFIGASAAAMLIFILPSAF. At 458 to 472 the chain is on the cytoplasmic side; sequence YIKLVKKEPMKSVQK. Residues 473–495 form a helical membrane-spanning segment; sequence IGAMFFLLSGIVVMTGSMALIVL. The Extracellular portion of the chain corresponds to 496–506; sequence DWVHNAPGGGH.

It belongs to the amino acid/polyamine transporter 2 family. Post-translationally, polyubiquitination by NEDD4L regulates the degradation and the activity of SLC38A2.

The protein resides in the cell membrane. It catalyses the reaction L-alanine(in) + Na(+)(in) = L-alanine(out) + Na(+)(out). The enzyme catalyses glycine(in) + Na(+)(in) = glycine(out) + Na(+)(out). It carries out the reaction L-serine(in) + Na(+)(in) = L-serine(out) + Na(+)(out). The catalysed reaction is L-proline(in) + Na(+)(in) = L-proline(out) + Na(+)(out). It catalyses the reaction L-methionine(in) + Na(+)(in) = L-methionine(out) + Na(+)(out). The enzyme catalyses L-histidine(in) + Na(+)(in) = L-histidine(out) + Na(+)(out). It carries out the reaction L-asparagine(in) + Na(+)(in) = L-asparagine(out) + Na(+)(out). The catalysed reaction is L-glutamine(in) + Na(+)(in) = L-glutamine(out) + Na(+)(out). It catalyses the reaction L-threonine(in) + Na(+)(in) = L-threonine(out) + Na(+)(out). The enzyme catalyses L-leucine(in) + Na(+)(in) = L-leucine(out) + Na(+)(out). It carries out the reaction L-phenylalanine(in) + Na(+)(in) = L-phenylalanine(out) + Na(+)(out). With respect to regulation, inhibited by N-methyl-D-glucamine. Inhibited by choline. Allosteric regulation of sodium ions binding by pH. Functionally, symporter that cotransports neutral amino acids and sodium ions from the extracellular to the intracellular side of the cell membrane. The transport is pH-sensitive, Li(+)-intolerant, electrogenic, driven by the Na(+) electrochemical gradient and cotransports of neutral amino acids and sodium ions with a stoichiometry of 1:1. May function in the transport of amino acids at the blood-brain barrier. May function in the transport of amino acids in the supply of maternal nutrients to the fetus through the placenta. Maintains a key metabolic glutamine/glutamate balance underpinning retrograde signaling by dendritic release of the neurotransmitter glutamate. Transports L-proline in differentiating osteoblasts for the efficient synthesis of proline-enriched proteins and provides proline essential for osteoblast differentiation and bone formation during bone development. This chain is Sodium-coupled neutral amino acid symporter 2, found in Bos taurus (Bovine).